We begin with the raw amino-acid sequence, 1270 residues long: Breakpoint cluster region protein (1270 aa).

Residues 28–55 adopt a coiled-coil conformation; it reads VGDIEQELERCKASIRRLEQEVNQERFR. Disordered stretches follow at residues 67–173, 201–249, 295–396, and 412–484; these read KKSY…SADA, ISSL…DYED, KSPL…RHRQ, and TGQI…LEPT. Positions 126–139 are enriched in low complexity; it reads GRPATARRPAAAAP. Phosphoserine occurs at positions 216 and 237. Residue Tyr-247 is modified to Phosphotyrosine. Low complexity-rich tracts occupy residues 348–358 and 371–384; these read SSGQSSRVSPS and SPSQ…DSSS. A phosphoserine mark is found at Ser-358, Ser-379, and Ser-384. Thr-387 carries the post-translational modification Phosphothreonine. 2 positions are modified to phosphoserine: Ser-461 and Ser-465. The residue at position 473 (Arg-473) is an Omega-N-methylarginine. Residues Ser-475 and Ser-487 each carry the phosphoserine modification. One can recognise a DH domain in the interval 497 to 690; it reads MRKWVLSGIL…QNFLSSINEE (194 aa). Residue Tyr-553 is modified to Phosphotyrosine. A Phosphothreonine modification is found at Thr-640. Tyr-643 is subject to Phosphotyrosine. Thr-692 is subject to Phosphothreonine. A PH domain is found at 707–865; the sequence is QLLKDSFMVE…WRESIREQQK (159 aa). Residues 892–1019 form the C2 domain; the sequence is HHIPLTINKE…QDRDWQRTVI (128 aa). The region spanning 1053 to 1247 is the Rho-GAP domain; that stretch reads VKIAVVTKRE…VMSQVQVLLY (195 aa). Position 1263 is a phosphoserine (Ser-1263).

In terms of assembly, homotetramer. Interacts with PDZK1. May interact with CCPG1. Interacts with HCK, FES/FPS, ABL1, PIK3R1 and GRB2. Interacts with SH2D5. Interacts with DLG4. Post-translationally, autophosphorylated. Phosphorylated by FES/FPS on tyrosine residues, leading to down-regulation of the BCR kinase activity. Phosphorylation by HCK is important for interaction with GRB2. Expressed in brain, including the cortex, hippocampus, cerebellum, and brainstem, as well as the spinal cord (at protein level).

The protein resides in the postsynaptic density. The protein localises to the cell projection. It is found in the dendritic spine. It localises to the axon. Its subcellular location is the synapse. It catalyses the reaction L-seryl-[protein] + ATP = O-phospho-L-seryl-[protein] + ADP + H(+). It carries out the reaction L-threonyl-[protein] + ATP = O-phospho-L-threonyl-[protein] + ADP + H(+). Functionally, protein with a unique structure having two opposing regulatory activities toward small GTP-binding proteins. The C-terminus is a GTPase-activating protein (GAP) domain which stimulates GTP hydrolysis by RAC1, RAC2 and CDC42. Accelerates the intrinsic rate of GTP hydrolysis of RAC1 or CDC42, leading to down-regulation of the active GTP-bound form. The central Dbl homology (DH) domain functions as guanine nucleotide exchange factor (GEF) that modulates the GTPases CDC42, RHOA and RAC1. Promotes the conversion of CDC42, RHOA and RAC1 from the GDP-bound to the GTP-bound form. The amino terminus contains an intrinsic kinase activity. Functions as an important negative regulator of neuronal RAC1 activity. Regulates macrophage functions such as CSF1-directed motility and phagocytosis through the modulation of RAC1 activity. Plays a major role as a RHOA GEF in keratinocytes being involved in focal adhesion formation and keratinocyte differentiation. The chain is Breakpoint cluster region protein from Rattus norvegicus (Rat).